The sequence spans 422 residues: Tk-subtilisin (422 aa).

The signal sequence occupies residues 1–24 (MKKSIALVLSIVLLAALFAVPASA). The propeptide occupies 25-106 (GEQNTIRVIV…SWLGGGSTQP (82 aa)). In terms of domain architecture, Peptidase S8 spans 111–417 (PWGIERVKAP…YGVVRAALAV (307 aa)). Residues Asp-139, His-177, and Ser-348 each act as charge relay system in the active site.

It belongs to the peptidase S8 family. In terms of assembly, monomer. The cofactor is Ca(2+).

It is found in the secreted. In terms of biological role, has a broad substrate specificity with a slight preference to large hydrophobic amino acid residues at the P1 position. This Thermococcus kodakarensis (strain ATCC BAA-918 / JCM 12380 / KOD1) (Pyrococcus kodakaraensis (strain KOD1)) protein is Tk-subtilisin.